An 86-amino-acid polypeptide reads, in one-letter code: Dolichyl-diphosphooligosaccharide--protein glycosyltransferase subunit OST5 (86 aa).

Residues 2–27 (TYEQLYKEFHSSKSFQPFIHLDTQPK) lie on the Lumenal side of the membrane. A helical membrane pass occupies residues 28-48 (FAICGLIVTLAVLSSALFAVG). At 49–56 (SKSSYIKK) the chain is on the cytoplasmic side. The helical transmembrane segment at 57-77 (LFFYTILSVIGSLFAGLTTVF) threads the bilayer. Residues 78–86 (ASNSFGVYV) are Lumenal-facing.

The protein belongs to the OST5 family. As to quaternary structure, component of the oligosaccharyltransferase (OST) complex, which appears to exist in two assemblies comprising OST1, OST2, OST4, OST5, STT3, SWP1, WPB1, and either OST3 or OST6. OST assembly occurs through the formation of 3 subcomplexes. Subcomplex 1 contains OST1 and OST5, subcomplex 2 contains STT3, OST3, and OST4, and subcomplex 3 contains OST2, WBP1, and SWP1.

It localises to the endoplasmic reticulum membrane. Its pathway is protein modification; protein glycosylation. Functionally, subunit of the oligosaccharyl transferase (OST) complex that catalyzes the initial transfer of a defined glycan (Glc(3)Man(9)GlcNAc(2) in eukaryotes) from the lipid carrier dolichol-pyrophosphate to an asparagine residue within an Asn-X-Ser/Thr consensus motif in nascent polypeptide chains, the first step in protein N-glycosylation. N-glycosylation occurs cotranslationally and the complex associates with the Sec61 complex at the channel-forming translocon complex that mediates protein translocation across the endoplasmic reticulum (ER). All subunits are required for a maximal enzyme activity. In Saccharomyces cerevisiae (strain ATCC 204508 / S288c) (Baker's yeast), this protein is Dolichyl-diphosphooligosaccharide--protein glycosyltransferase subunit OST5 (OST5).